The primary structure comprises 326 residues: Inactive peptidyl-prolyl cis-trans isomerase FKBP6 (326 aa).

The 90-residue stretch at 53-142 (DASVLVKYSG…LFEIELLDFL (90 aa)) folds into the PPIase FKBP-type domain. TPR repeat units follow at residues 170–203 (AATE…LHRR), 218–251 (LLVF…DRKN), and 252–285 (AKAL…QPFN).

Belongs to the FKBP6 family. Interacts with HSP72/HSPA2 and CLTC. Interacts with GAPDH; leading to inhibit GAPDH catalytic activity. Interacts (via TPR repeats) with HSP90.

The protein localises to the cytoplasm. It is found in the cytosol. Its subcellular location is the nucleus. Functionally, co-chaperone required during spermatogenesis to repress transposable elements and prevent their mobilization, which is essential for the germline integrity. Acts via the piRNA metabolic process, which mediates the repression of transposable elements during meiosis by forming complexes composed of piRNAs and Piwi proteins and govern the methylation and subsequent repression of transposons. Acts as a co-chaperone via its interaction with HSP90 and is required for the piRNA amplification process, the secondary piRNA biogenesis. May be required together with HSP90 in removal of 16 nucleotide ping-pong by-products from Piwi complexes, possibly facilitating turnover of Piwi complexes. The polypeptide is Inactive peptidyl-prolyl cis-trans isomerase FKBP6 (FKBP6) (Bos taurus (Bovine)).